Reading from the N-terminus, the 349-residue chain is MILQEQELKWSLEKGKSNMTIKGITFIGGGSFGTALGIMLAKKGYNINIWDRKPHVIADINEKKENIKYLPNVVIPSNVKAYKGMKEALVGIKYVVISVPSHAIREICRNMKDYLKEDAIIISVAKGIEEHSGKRLSQIIKEELPKNPVVILSGPSHAEEVAQDIPTTVVVTSEDVKASLEVQNLFSTNKFRVYTNDDIIGVEIGGAVKNIIALAAGISDGIGYGDNTKAALMTRGINEIIRIGEKLGGQRETFWGLTGMGDMIVTCTSMHSRNRRAGLLIGKGLSMEEAIEEVGMVVEGIKACKAFYELKEKLKVSMPITDALYRVLFQGEDAKYCVYELMTRDKKDE.

NADPH is bound by residues Ser-31, Phe-32, Arg-52, Lys-53, and Lys-126. Residues Lys-126, Gly-154, and Ser-156 each coordinate sn-glycerol 3-phosphate. Residue Ala-158 participates in NADPH binding. Lys-209, Asp-262, Ser-272, Arg-273, and Asn-274 together coordinate sn-glycerol 3-phosphate. The Proton acceptor role is filled by Lys-209. Arg-273 provides a ligand contact to NADPH. Residues Val-297 and Glu-299 each contribute to the NADPH site.

Belongs to the NAD-dependent glycerol-3-phosphate dehydrogenase family.

The protein resides in the cytoplasm. It carries out the reaction sn-glycerol 3-phosphate + NAD(+) = dihydroxyacetone phosphate + NADH + H(+). The catalysed reaction is sn-glycerol 3-phosphate + NADP(+) = dihydroxyacetone phosphate + NADPH + H(+). It functions in the pathway membrane lipid metabolism; glycerophospholipid metabolism. In terms of biological role, catalyzes the reduction of the glycolytic intermediate dihydroxyacetone phosphate (DHAP) to sn-glycerol 3-phosphate (G3P), the key precursor for phospholipid synthesis. This is Glycerol-3-phosphate dehydrogenase [NAD(P)+] from Clostridium tetani (strain Massachusetts / E88).